The sequence spans 111 residues: Cytochrome c2 (111 aa).

C14, C17, H18, and M83 together coordinate heme c.

This sequence belongs to the cytochrome c family. In terms of processing, binds 1 heme c group covalently per subunit.

Cytochrome c2 is found mainly in purple, non-sulfur, photosynthetic bacteria where it functions as the electron donor to the oxidized bacteriochlorophyll in the photophosphorylation pathway. However, it may also have a role in the respiratory chain and is found in some non-photosynthetic bacteria. The sequence is that of Cytochrome c2 from Agrobacterium tumefaciens (strain II Chrys).